The following is a 433-amino-acid chain: Serine hydroxymethyltransferase (433 aa).

(6S)-5,6,7,8-tetrahydrofolate is bound at residue 121–123 (AHV). At lysine 227 the chain carries N6-(pyridoxal phosphate)lysine. (6S)-5,6,7,8-tetrahydrofolate is bound at residue glutamate 243.

This sequence belongs to the SHMT family. As to quaternary structure, homodimer. Pyridoxal 5'-phosphate is required as a cofactor.

The protein localises to the cytoplasm. The protein operates within amino-acid biosynthesis; glycine biosynthesis; glycine from L-serine: step 1/1. In terms of biological role, catalyzes the reversible interconversion of serine and glycine with a modified folate serving as the one-carbon carrier. Also exhibits a pteridine-independent aldolase activity toward beta-hydroxyamino acids, producing glycine and aldehydes, via a retro-aldol mechanism. This is Serine hydroxymethyltransferase from Saccharolobus islandicus (strain M.14.25 / Kamchatka #1) (Sulfolobus islandicus).